Consider the following 153-residue polypeptide: Large ribosomal subunit protein uL30 (153 aa).

This sequence belongs to the universal ribosomal protein uL30 family. Part of the 50S ribosomal subunit.

This is Large ribosomal subunit protein uL30 from Methanospirillum hungatei JF-1 (strain ATCC 27890 / DSM 864 / NBRC 100397 / JF-1).